The primary structure comprises 420 residues: Nucleobindin-2 (420 aa).

An N-terminal signal peptide occupies residues 1–24 (MRWRIIQVQYCFLLVPCMLTALEA). A DNA-binding region spans residues 171–223 (RTRHEEFKKYEMMKEHERREYLKTLSEEKRKEEESKFEEMKRKHEDHPKVNHP). Residues 193-225 (KTLSEEKRKEEESKFEEMKRKHEDHPKVNHPGS) form a disordered region. Positions 213–420 (KHEDHPKVNH…AGELKFEPHT (208 aa)) are binds to necdin. 2 consecutive EF-hand domains span residues 241–276 (PNDF…ELEK) and 293–328 (ERLR…KEFL). Ca(2+) is bound by residues Asp254, Asn256, Asp258, Glu265, Asp306, Asn308, Asp310, and Glu317. The short motif at 304 to 334 (EIDNNKDRLVTLEEFLRATEKKEFLEPDSWE) is the GBA element. Residue Ser332 is modified to Phosphoserine. Positions 365–389 (AEELQKQKEDLQRQHDHLEAQKQEY) are enriched in basic and acidic residues. Residues 365–420 (AEELQKQKEDLQRQHDHLEAQKQEYHQAVQHLEQKKLQQGIAPSGPAGELKFEPHT) form a disordered region.

The protein belongs to the nucleobindin family. As to quaternary structure, interacts (via GBA motif) with guanine nucleotide-binding protein G(i) alpha subunit GNAI3. Preferentially interacts with inactive rather than active GNAI3. Interaction with GNAI3 is inhibited when NUCB2 binds calcium, probably due to a conformational change which renders the GBA motif inaccessible. Binds to the postmitotic growth suppressor NDN; coexpression abolishes NUCB2 secretion. Interacts with MC4R. In terms of tissue distribution, found in liver, heart, thymus, muscle, intestine, kidney, lung, spleen and throughout the brain, in cerebral cortex, hippocampus, hypothalamus and medulla oblongata. Nucb2 and necdin levels were higher in postmitotic neurons.

The protein localises to the cytoplasm. Its subcellular location is the perikaryon. It localises to the endoplasmic reticulum. It is found in the golgi apparatus. The protein resides in the nucleus envelope. The protein localises to the membrane. Its subcellular location is the secreted. Its function is as follows. Calcium-binding protein which may have a role in calcium homeostasis. Acts as a non-receptor guanine nucleotide exchange factor which binds to and activates guanine nucleotide-binding protein (G-protein) alpha subunit GNAI3. In terms of biological role, anorexigenic peptide, seems to play an important role in hypothalamic pathways regulating food intake and energy homeostasis, acting in a leptin-independent manner. May also exert hypertensive roles and modulate blood pressure through directly acting on peripheral arterial resistance. In intestinal epithelial cells, plays a role in the inhibition of hepatic glucose production via MC4R receptor leading to increased cyclic adenosine monophosphate (cAMP) levels and glucagon-like peptide 1 (GLP-1) secretion. This chain is Nucleobindin-2 (Nucb2), found in Mus musculus (Mouse).